The sequence spans 147 residues: Lysozyme C (147 aa).

An N-terminal signal peptide occupies residues 1-17; the sequence is MRSLLILVLCFLPLAAP. Residues 19–147 form the C-type lysozyme domain; it reads KVYGRCELAA…VNVWIRGCRL (129 aa). Cystine bridges form between Cys24-Cys145, Cys48-Cys133, Cys82-Cys98, and Cys94-Cys112. Active-site residues include Glu53 and Asp70.

It belongs to the glycosyl hydrolase 22 family. Monomer. By an evolutionary shift in the site of proteolytic cleavage of prelysozyme, Gly-18 became the N-terminal residue of the mature protein instead of being the C-terminal residue of the signal sequence as in other birds.

It localises to the secreted. The enzyme catalyses Hydrolysis of (1-&gt;4)-beta-linkages between N-acetylmuramic acid and N-acetyl-D-glucosamine residues in a peptidoglycan and between N-acetyl-D-glucosamine residues in chitodextrins.. Lysozymes have primarily a bacteriolytic function; those in tissues and body fluids are associated with the monocyte-macrophage system and enhance the activity of immunoagents. In Phasianus colchicus colchicus (Black-necked pheasant), this protein is Lysozyme C (LYZ).